The primary structure comprises 757 residues: MDVNPTLLFLKVPAQNAISTTFPYTGDPPYSHGTGTGYTMDTVNRTHQYSERGRWTKNTETGAPQLNPIDGPLPKDNEPSGYAQTDCVLEAMAFLEESHPGIFENSCIETMEVVQQTRVDKLTQGRQTYDWTLNRNQPAATALANTIEVFRSNGLKANESGRLIDFLKDVMESMDREEVEITTHFQRKRRVRDNVTKKMVTQRTIGKKKHRLNKRSYLIRALTLNTMTKDAERGKLKRRAIATPGMQIRGFVYFVETLARSICEKLEQSGLPVGGNEKKAKLANVVRKMMTNSQDTEISFTITGDNTKWNENQNPRMFLAMITYITRNQPEWFRNILSIAPIMFSNKMARLGKGYMFESKSMKLRTQIPAEMLANIDLKYFNDSTRKKIEKIRPLLIDGTASLSPGMMMGMFNMLSTVLGVSILNLGQKRYTKTTYWWDGLQSSDDFALIVNAPNYAGIQAGVDRFYRTCKLLGINMSKKKSYMNRTGTFEFTSFFYRYGFVANFSMELPSFGVSGINESADMSIGVTVIKNNMINNDLGPATAQMALQLFIKDYRYTYRCHRGDTQIQTRRSFEIKKLWDQTRSKAGLLVSDGGPNLYNIRNLHIPEVCLKWELMDEDYQGRLCNPLNPFVSHKEIESVNNAVMMPAHGPAKNMEYDAVATTHSWVPKRNRSILNTSQRGILEDEQMYQRCCNLFEKFFPSSSYRRPVGISSMVEAMVSRARIDARIDFESGRIKKEEFTEIMKTCSTIEELRRQK.

The segment at 53-82 is disordered; the sequence is GRWTKNTETGAPQLNPIDGPLPKDNEPSGY. 2 short sequence motifs (nuclear localization signal) span residues 187–195 and 203–216; these read RKRRVRDNV and RTIG…NKRS. The tract at residues 249–256 is promoter-binding site; sequence RGFVYFVE. A RdRp catalytic domain is found at 286-483; it reads VRKMMTNSQD…GINMSKKKSY (198 aa).

It belongs to the influenza viruses polymerase PB1 family. As to quaternary structure, influenza RNA polymerase is composed of three subunits: PB1, PB2 and PA. Interacts (via N-terminus) with PA (via C-terminus). Interacts (via C-terminus) with PB2 (via N-terminus); this interaction is essential for transcription initiation. Interacts (via C-terminus) with human PKP2 (via N-terminus); the interaction competitively inhibits the interaction between the RNA polymerase subunits PB1 and PB2. Post-translationally, phosphorylated by host PRKCA.

The protein resides in the host nucleus. The protein localises to the host cytoplasm. The catalysed reaction is RNA(n) + a ribonucleoside 5'-triphosphate = RNA(n+1) + diphosphate. RNA-dependent RNA polymerase which is responsible for replication and transcription of virus RNA segments. The transcription of viral mRNAs occurs by a unique mechanism called cap-snatching. 5' methylated caps of cellular mRNAs are cleaved after 10-13 nucleotides by PA. In turn, these short capped RNAs are used as primers by PB1 for transcription of viral mRNAs. During virus replication, PB1 initiates RNA synthesis and copy vRNA into complementary RNA (cRNA) which in turn serves as a template for the production of more vRNAs. This chain is RNA-directed RNA polymerase catalytic subunit, found in Influenza A virus (strain A/India/6263/1980 H1N1).